Consider the following 309-residue polypeptide: Homoserine kinase (309 aa).

P91–C101 serves as a coordination point for ATP.

It belongs to the GHMP kinase family. Homoserine kinase subfamily.

The protein resides in the cytoplasm. It carries out the reaction L-homoserine + ATP = O-phospho-L-homoserine + ADP + H(+). It participates in amino-acid biosynthesis; L-threonine biosynthesis; L-threonine from L-aspartate: step 4/5. Functionally, catalyzes the ATP-dependent phosphorylation of L-homoserine to L-homoserine phosphate. This Klebsiella pneumoniae subsp. pneumoniae (strain ATCC 700721 / MGH 78578) protein is Homoserine kinase.